The chain runs to 562 residues: NAD-dependent malic enzyme (562 aa).

Tyr101 (proton donor) is an active-site residue. Arg154 lines the NAD(+) pocket. Lys172 (proton acceptor) is an active-site residue. A divalent metal cation contacts are provided by Glu243, Asp244, and Asp267. The NAD(+) site is built by Asp267 and Asn415.

This sequence belongs to the malic enzymes family. In terms of assembly, homotetramer. Requires Mg(2+) as cofactor. Mn(2+) is required as a cofactor.

The catalysed reaction is (S)-malate + NAD(+) = pyruvate + CO2 + NADH. It catalyses the reaction oxaloacetate + H(+) = pyruvate + CO2. The protein is NAD-dependent malic enzyme of Shewanella sediminis (strain HAW-EB3).